A 116-amino-acid chain; its full sequence is Host cell factor C1 regulator 1 (116 aa).

Residues 1–22 (MILQQPLERGPPGRDPRATTGV) form a disordered region. The interval 54-57 (DHPY) is interaction with HCFC1. The short motif at 88-97 (IPEALRLLRL) is the Nuclear export signal element.

As to quaternary structure, interacts with HCFC1.

It localises to the cytoplasm. It is found in the nucleus. Its function is as follows. Regulates HCFC1 activity by modulating its subcellular localization. Overexpression of HCFC1R1 leads to accumulation of HCFC1 in the cytoplasm. HCFC1R1-mediated export may provide the pool of cytoplasmic HCFC1 required for import of virion-derived VP16 into the nucleus. The protein is Host cell factor C1 regulator 1 (Hcfc1r1) of Rattus norvegicus (Rat).